A 146-amino-acid chain; its full sequence is Putative inactive cytochrome P450 2G1 (146 aa).

A heme-binding site is contributed by Cys-91.

The protein belongs to the cytochrome P450 family. It depends on heme as a cofactor.

This chain is Putative inactive cytochrome P450 2G1 (CYP2G1P), found in Homo sapiens (Human).